The sequence spans 36 residues: GPSQPTYPGNDAPVEDLRFYYDNLQQYRLNVFRHRY.

A Tyrosine amide modification is found at tyrosine 36.

It belongs to the NPY family.

The protein resides in the secreted. Functionally, hormone secreted by pancreatic cells that acts as a regulator of pancreatic and gastrointestinal functions. This is Pancreatic polypeptide (PPY) from Anser anser anser (Western greylag goose).